A 401-amino-acid chain; its full sequence is 1-deoxy-D-xylulose 5-phosphate reductoisomerase (401 aa).

NADPH is bound by residues threonine 11, glycine 12, serine 13, isoleucine 14, arginine 38, asparagine 39, and asparagine 125. Lysine 126 contributes to the 1-deoxy-D-xylulose 5-phosphate binding site. Glutamate 127 provides a ligand contact to NADPH. Aspartate 151 is a Mn(2+) binding site. 1-deoxy-D-xylulose 5-phosphate contacts are provided by serine 152, glutamate 153, serine 179, and histidine 202. Glutamate 153 contacts Mn(2+). NADPH is bound at residue glycine 208. The 1-deoxy-D-xylulose 5-phosphate site is built by serine 215, asparagine 220, lysine 221, and glutamate 224. Mn(2+) is bound at residue glutamate 224.

This sequence belongs to the DXR family. Mg(2+) is required as a cofactor. Mn(2+) serves as cofactor.

The catalysed reaction is 2-C-methyl-D-erythritol 4-phosphate + NADP(+) = 1-deoxy-D-xylulose 5-phosphate + NADPH + H(+). Its pathway is isoprenoid biosynthesis; isopentenyl diphosphate biosynthesis via DXP pathway; isopentenyl diphosphate from 1-deoxy-D-xylulose 5-phosphate: step 1/6. Its function is as follows. Catalyzes the NADPH-dependent rearrangement and reduction of 1-deoxy-D-xylulose-5-phosphate (DXP) to 2-C-methyl-D-erythritol 4-phosphate (MEP). The sequence is that of 1-deoxy-D-xylulose 5-phosphate reductoisomerase from Paraburkholderia phymatum (strain DSM 17167 / CIP 108236 / LMG 21445 / STM815) (Burkholderia phymatum).